We begin with the raw amino-acid sequence, 341 residues long: RNA 3'-terminal phosphate cyclase (341 aa).

Residues glutamine 102 and 283-287 contribute to the ATP site; that span reads HLADQ. Histidine 308 serves as the catalytic Tele-AMP-histidine intermediate.

This sequence belongs to the RNA 3'-terminal cyclase family. Type 1 subfamily.

Its subcellular location is the cytoplasm. The enzyme catalyses a 3'-end 3'-phospho-ribonucleotide-RNA + ATP = a 3'-end 2',3'-cyclophospho-ribonucleotide-RNA + AMP + diphosphate. Catalyzes the conversion of 3'-phosphate to a 2',3'-cyclic phosphodiester at the end of RNA. The mechanism of action of the enzyme occurs in 3 steps: (A) adenylation of the enzyme by ATP; (B) transfer of adenylate to an RNA-N3'P to produce RNA-N3'PP5'A; (C) and attack of the adjacent 2'-hydroxyl on the 3'-phosphorus in the diester linkage to produce the cyclic end product. The biological role of this enzyme is unknown but it is likely to function in some aspects of cellular RNA processing. The sequence is that of RNA 3'-terminal phosphate cyclase from Ectopseudomonas mendocina (strain ymp) (Pseudomonas mendocina).